Here is a 357-residue protein sequence, read N- to C-terminus: tRNA-specific 2-thiouridylase MnmA (357 aa).

ATP is bound by residues 8–15 and Ile34; that span reads GISGGVDS. The active-site Nucleophile is the Cys96. A disulfide bridge connects residues Cys96 and Cys192. Gly120 is a binding site for ATP. The interval 142 to 144 is interaction with tRNA; that stretch reads KDQ. The active-site Cysteine persulfide intermediate is Cys192. The tract at residues 301 to 302 is interaction with tRNA; the sequence is RY.

Belongs to the MnmA/TRMU family.

It is found in the cytoplasm. The catalysed reaction is S-sulfanyl-L-cysteinyl-[protein] + uridine(34) in tRNA + AH2 + ATP = 2-thiouridine(34) in tRNA + L-cysteinyl-[protein] + A + AMP + diphosphate + H(+). Functionally, catalyzes the 2-thiolation of uridine at the wobble position (U34) of tRNA, leading to the formation of s(2)U34. This Chlorobium phaeobacteroides (strain DSM 266 / SMG 266 / 2430) protein is tRNA-specific 2-thiouridylase MnmA.